The sequence spans 340 residues: Replication initiation protein (340 aa).

Residues 38-58 (PERKRTKRRRGEHSTKPKCEN) form a disordered region.

The chain is Replication initiation protein (repA1) from Escherichia coli.